The chain runs to 189 residues: Elongation factor P (189 aa).

Belongs to the elongation factor P family.

The protein localises to the cytoplasm. It participates in protein biosynthesis; polypeptide chain elongation. Involved in peptide bond synthesis. Stimulates efficient translation and peptide-bond synthesis on native or reconstituted 70S ribosomes in vitro. Probably functions indirectly by altering the affinity of the ribosome for aminoacyl-tRNA, thus increasing their reactivity as acceptors for peptidyl transferase. The chain is Elongation factor P from Aster yellows witches'-broom phytoplasma (strain AYWB).